Consider the following 216-residue polypeptide: Probable GTP-binding protein EngB (216 aa).

Residues 37 to 214 (GSVEIAFAGR…RAAMIRLLDE (178 aa)) form the EngB-type G domain. GTP is bound by residues 45-52 (GRSNVGKS), 72-76 (GRTQE), 92-95 (DMPG), 159-162 (TKAD), and 193-195 (TSS). Positions 52 and 74 each coordinate Mg(2+).

Belongs to the TRAFAC class TrmE-Era-EngA-EngB-Septin-like GTPase superfamily. EngB GTPase family. Mg(2+) is required as a cofactor.

Its function is as follows. Necessary for normal cell division and for the maintenance of normal septation. This chain is Probable GTP-binding protein EngB, found in Rhodopseudomonas palustris (strain ATCC BAA-98 / CGA009).